Reading from the N-terminus, the 61-residue chain is Small ribosomal subunit protein uS14 (61 aa).

The Zn(2+) site is built by Cys-24, Cys-27, Cys-40, and Cys-43.

This sequence belongs to the universal ribosomal protein uS14 family. Zinc-binding uS14 subfamily. In terms of assembly, part of the 30S ribosomal subunit. Contacts proteins S3 and S10. The cofactor is Zn(2+).

Functionally, binds 16S rRNA, required for the assembly of 30S particles and may also be responsible for determining the conformation of the 16S rRNA at the A site. In Clostridioides difficile (strain 630) (Peptoclostridium difficile), this protein is Small ribosomal subunit protein uS14.